Reading from the N-terminus, the 116-residue chain is Large ribosomal subunit protein bL19 (116 aa).

This sequence belongs to the bacterial ribosomal protein bL19 family.

Functionally, this protein is located at the 30S-50S ribosomal subunit interface and may play a role in the structure and function of the aminoacyl-tRNA binding site. The chain is Large ribosomal subunit protein bL19 from Flavobacterium johnsoniae (strain ATCC 17061 / DSM 2064 / JCM 8514 / BCRC 14874 / CCUG 350202 / NBRC 14942 / NCIMB 11054 / UW101) (Cytophaga johnsonae).